Reading from the N-terminus, the 457-residue chain is Ribulose bisphosphate carboxylase-like protein (457 aa).

Residues lysine 199, aspartate 201, and glutamate 202 each coordinate Mg(2+). Lysine 199 bears the N6-carboxylysine mark. The disordered stretch occupies residues 426–457 (AIAAFGKPAHGQAASPQPSEQASEPDAAGGDS).

This sequence belongs to the RuBisCO large chain family. Type IV subfamily. Mg(2+) is required as a cofactor.

Its function is as follows. May be involved in sulfur metabolism and oxidative stress response. Does not show RuBisCO activity. In Allochromatium vinosum (strain ATCC 17899 / DSM 180 / NBRC 103801 / NCIMB 10441 / D) (Chromatium vinosum), this protein is Ribulose bisphosphate carboxylase-like protein.